A 255-amino-acid polypeptide reads, in one-letter code: Flap endonuclease Xni (255 aa).

Aspartate 105 serves as a coordination point for Mg(2+). The 93-residue stretch at 162-254 (EHKQFIDYLA…LKQFRLPKAN (93 aa)) folds into the 5'-3' exonuclease domain. Residues leucine 172, alanine 173, proline 181, valine 183, and isoleucine 186 each coordinate K(+). The interaction with DNA stretch occupies residues 185–190 (GIGPKS).

Belongs to the Xni family. Requires Mg(2+) as cofactor. K(+) is required as a cofactor.

In terms of biological role, has flap endonuclease activity. During DNA replication, flap endonucleases cleave the 5'-overhanging flap structure that is generated by displacement synthesis when DNA polymerase encounters the 5'-end of a downstream Okazaki fragment. The protein is Flap endonuclease Xni of Shewanella piezotolerans (strain WP3 / JCM 13877).